The chain runs to 134 residues: Arsenate reductase 2 (134 aa).

Residues C11, C83, and C90 each act as nucleophile in the active site. Cystine bridges form between C11/C83 and C83/C90.

It belongs to the low molecular weight phosphotyrosine protein phosphatase family. Thioredoxin-coupled ArsC subfamily.

It is found in the cytoplasm. It carries out the reaction arsenate + [thioredoxin]-dithiol + H(+) = arsenite + [thioredoxin]-disulfide + H2O. Its function is as follows. Catalyzes the reduction of arsenate [As(V)] to arsenite [As(III)]. The sequence is that of Arsenate reductase 2 from Bacillus cereus (strain ATCC 10987 / NRS 248).